Consider the following 384-residue polypeptide: Anhydro-N-acetylmuramic acid kinase (384 aa).

Residue 12–19 (GTSLDGVD) coordinates ATP.

This sequence belongs to the anhydro-N-acetylmuramic acid kinase family.

The enzyme catalyses 1,6-anhydro-N-acetyl-beta-muramate + ATP + H2O = N-acetyl-D-muramate 6-phosphate + ADP + H(+). The protein operates within amino-sugar metabolism; 1,6-anhydro-N-acetylmuramate degradation. It participates in cell wall biogenesis; peptidoglycan recycling. Its function is as follows. Catalyzes the specific phosphorylation of 1,6-anhydro-N-acetylmuramic acid (anhMurNAc) with the simultaneous cleavage of the 1,6-anhydro ring, generating MurNAc-6-P. Is required for the utilization of anhMurNAc either imported from the medium or derived from its own cell wall murein, and thus plays a role in cell wall recycling. In Cronobacter sakazakii (strain ATCC BAA-894) (Enterobacter sakazakii), this protein is Anhydro-N-acetylmuramic acid kinase.